Consider the following 131-residue polypeptide: uncharacterized protein (131 aa).

A run of 2 helical transmembrane segments spans residues 61-81 (LLLL…YLPI) and 102-122 (VCSI…ALRY).

The protein localises to the membrane. This is an uncharacterized protein from Saccharomyces cerevisiae (strain ATCC 204508 / S288c) (Baker's yeast).